Here is a 506-residue protein sequence, read N- to C-terminus: 2-isopropylmalate synthase (506 aa).

The Pyruvate carboxyltransferase domain occupies 8-272 (LIVFDTTLRD…ETGIQLKEIL (265 aa)). Residues aspartate 17, histidine 206, histidine 208, and asparagine 242 each coordinate Mn(2+). A regulatory domain region spans residues 396-506 (ELEYVAVTVC…YLNAVNKALL (111 aa)).

This sequence belongs to the alpha-IPM synthase/homocitrate synthase family. LeuA type 1 subfamily. As to quaternary structure, homodimer. The cofactor is Mn(2+).

The protein resides in the cytoplasm. The enzyme catalyses 3-methyl-2-oxobutanoate + acetyl-CoA + H2O = (2S)-2-isopropylmalate + CoA + H(+). It participates in amino-acid biosynthesis; L-leucine biosynthesis; L-leucine from 3-methyl-2-oxobutanoate: step 1/4. Catalyzes the condensation of the acetyl group of acetyl-CoA with 3-methyl-2-oxobutanoate (2-ketoisovalerate) to form 3-carboxy-3-hydroxy-4-methylpentanoate (2-isopropylmalate). The sequence is that of 2-isopropylmalate synthase from Methylacidiphilum infernorum (isolate V4) (Methylokorus infernorum (strain V4)).